Consider the following 521-residue polypeptide: Bifunctional purine biosynthesis protein PurH (521 aa).

In terms of domain architecture, MGS-like spans 1–145 (MIKQALISVS…KNHRDVTVVV (145 aa)).

This sequence belongs to the PurH family.

It carries out the reaction (6R)-10-formyltetrahydrofolate + 5-amino-1-(5-phospho-beta-D-ribosyl)imidazole-4-carboxamide = 5-formamido-1-(5-phospho-D-ribosyl)imidazole-4-carboxamide + (6S)-5,6,7,8-tetrahydrofolate. It catalyses the reaction IMP + H2O = 5-formamido-1-(5-phospho-D-ribosyl)imidazole-4-carboxamide. Its pathway is purine metabolism; IMP biosynthesis via de novo pathway; 5-formamido-1-(5-phospho-D-ribosyl)imidazole-4-carboxamide from 5-amino-1-(5-phospho-D-ribosyl)imidazole-4-carboxamide (10-formyl THF route): step 1/1. The protein operates within purine metabolism; IMP biosynthesis via de novo pathway; IMP from 5-formamido-1-(5-phospho-D-ribosyl)imidazole-4-carboxamide: step 1/1. In Burkholderia ambifaria (strain MC40-6), this protein is Bifunctional purine biosynthesis protein PurH.